A 157-amino-acid polypeptide reads, in one-letter code: 2-C-methyl-D-erythritol 2,4-cyclodiphosphate synthase (157 aa).

A divalent metal cation is bound by residues D8 and H10. 4-CDP-2-C-methyl-D-erythritol 2-phosphate is bound by residues 8 to 10 (DVH) and 34 to 35 (HS). Residue H42 coordinates a divalent metal cation. 4-CDP-2-C-methyl-D-erythritol 2-phosphate is bound by residues 56–58 (DIG), 132–135 (TTNE), and R142.

The protein belongs to the IspF family. In terms of assembly, homotrimer. The cofactor is a divalent metal cation.

It catalyses the reaction 4-CDP-2-C-methyl-D-erythritol 2-phosphate = 2-C-methyl-D-erythritol 2,4-cyclic diphosphate + CMP. The protein operates within isoprenoid biosynthesis; isopentenyl diphosphate biosynthesis via DXP pathway; isopentenyl diphosphate from 1-deoxy-D-xylulose 5-phosphate: step 4/6. In terms of biological role, involved in the biosynthesis of isopentenyl diphosphate (IPP) and dimethylallyl diphosphate (DMAPP), two major building blocks of isoprenoid compounds. Catalyzes the conversion of 4-diphosphocytidyl-2-C-methyl-D-erythritol 2-phosphate (CDP-ME2P) to 2-C-methyl-D-erythritol 2,4-cyclodiphosphate (ME-CPP) with a corresponding release of cytidine 5-monophosphate (CMP). In Chlorobaculum parvum (strain DSM 263 / NCIMB 8327) (Chlorobium vibrioforme subsp. thiosulfatophilum), this protein is 2-C-methyl-D-erythritol 2,4-cyclodiphosphate synthase.